A 403-amino-acid chain; its full sequence is Interferon-induced protein with tetratricopeptide repeats 3 (403 aa).

TPR repeat units follow at residues 94–127 (LVTW…CQKF), 136–169 (PELE…KPKD), 172–206 (CSSG…NPQN), and 241–274 (TDVL…TVNN).

This sequence belongs to the IFIT family. In terms of assembly, component of an interferon-dependent multiprotein complex, at least composed of IFIT1, IFIT2 and IFIT3. Interacts with IFIT1 and IFIT2. Interacts (via N-terminus) with MAVS, TBK1, TRAF6 and RIGI. Interacts with COPS5.

The protein resides in the cytoplasm. It is found in the mitochondrion. Functionally, IFN-induced antiviral protein which acts as an inhibitor of cellular as well as viral processes, cell migration, proliferation, signaling, and viral replication. Enhances MAVS-mediated host antiviral responses by serving as an adapter bridging TBK1 to MAVS which leads to the activation of TBK1 and phosphorylation of IRF3 and phosphorylated IRF3 translocates into nucleus to promote antiviral gene transcription. Exhibits an antiproliferative activity via the up-regulation of cell cycle negative regulators CDKN1A/p21 and CDKN1B/p27. Normally, CDKN1B/p27 turnover is regulated by COPS5, which binds CDKN1B/p27 in the nucleus and exports it to the cytoplasm for ubiquitin-dependent degradation. IFIT3 sequesters COPS5 in the cytoplasm, thereby increasing nuclear CDKN1B/p27 protein levels. Up-regulates CDKN1A/p21 by down-regulating MYC, a repressor of CDKN1A/p21. Can negatively regulate the apoptotic effects of IFIT2. This chain is Interferon-induced protein with tetratricopeptide repeats 3 (Ifit3), found in Mus musculus (Mouse).